We begin with the raw amino-acid sequence, 331 residues long: UPF0194 membrane protein CKO_02332 (331 aa).

An N-terminal signal peptide occupies residues 1-15 (MKKPVVIALAVAALA). Positions 142 to 207 (ISANDLENAR…ELDLQDTTLI (66 aa)) form a coiled coil.

This sequence belongs to the UPF0194 family.

Its subcellular location is the periplasm. In Citrobacter koseri (strain ATCC BAA-895 / CDC 4225-83 / SGSC4696), this protein is UPF0194 membrane protein CKO_02332.